A 316-amino-acid chain; its full sequence is MEPVHYSVQGNNILQIFMENFHKEDPVLFLDGTAGEGGHSLLFLKGFPNSKVILCDRDPVMLSRALARLVDFKERVVSIQTNFSEIDSNLLSSHGINDSPQGILLDLGISTFHLFHSGRGFSFKEAEPLDMRLTPNIGINAEDVINTYSKDRLMHIFYTYGEERWSKKIAEVIVERRKQNLISYTSELADLISKIIPRKLWPPGRHPATRIFQALRIEVNQELTHIEKGLDSLLNLLRPEGVIQVISFHSLEDRIVKNSLRNYAKQNGFELLTKKPILPSEEETKENPASRSAKLRVLRKTKSADKKYKKENSKEE.

S-adenosyl-L-methionine contacts are provided by residues 37 to 39, aspartate 56, phenylalanine 83, aspartate 106, and histidine 113; that span reads GGH. The disordered stretch occupies residues 276 to 316; it reads PILPSEEETKENPASRSAKLRVLRKTKSADKKYKKENSKEE. Residues 302-316 are compositionally biased toward basic and acidic residues; the sequence is KSADKKYKKENSKEE.

Belongs to the methyltransferase superfamily. RsmH family.

The protein localises to the cytoplasm. The enzyme catalyses cytidine(1402) in 16S rRNA + S-adenosyl-L-methionine = N(4)-methylcytidine(1402) in 16S rRNA + S-adenosyl-L-homocysteine + H(+). Its function is as follows. Specifically methylates the N4 position of cytidine in position 1402 (C1402) of 16S rRNA. In Leptospira borgpetersenii serovar Hardjo-bovis (strain JB197), this protein is Ribosomal RNA small subunit methyltransferase H.